The following is a 545-amino-acid chain: Calcium-binding mitochondrial carrier SAL1 (545 aa).

The EF-hand 1 domain occupies 11–46; it reads QRDIRYACLFKELDVKGNGQVTLDNLISAFEKNDHP. Ca(2+) contacts are provided by Lys-65, Asp-70, Asp-93, Asp-95, Asp-97, Lys-99, and Glu-104. EF-hand domains lie at 80–115, 120–155, and 156–191; these read NAESQIWNGFQRIDLDHDGKIGINEINRYLSDLDNQ, NELNHELSNEKMNKFSRFFEWAFPKRKANIALRGQA, and SHKKNTDNDRSKKTTDSDLYVTYDQWRDFLLLVPRK. Residues Thr-161 and Ser-166 each contribute to the Ca(2+) site. Solcar repeat units follow at residues 225-332, 345-434, and 452-541; these read IRGF…TKKI, LSKF…LKKW, and LSNL…LKKF. 6 helical membrane passes run 231-248, 307-326, 355-368, 409-428, 458-475, and 516-535; these read FIAGGISGVISRTCTAPF, GNGLNVIKVFPESSIKFGSF, GLAGMAAQFSVYPI, GVTVGIVGIFPYAALDLGTF, LPMGAFSGTVGASVVYPI, and GLVPTLAKVCPAVSISYLCY.

It belongs to the mitochondrial carrier (TC 2.A.29) family.

The protein localises to the mitochondrion inner membrane. In terms of biological role, calcium-dependent mitochondrial solute carrier. In Saccharomyces cerevisiae (Baker's yeast), this protein is Calcium-binding mitochondrial carrier SAL1 (SAL1).